The following is a 110-amino-acid chain: Nucleoid-associated protein Sfum_2790 (110 aa).

The protein belongs to the YbaB/EbfC family. In terms of assembly, homodimer.

Its subcellular location is the cytoplasm. The protein resides in the nucleoid. Binds to DNA and alters its conformation. May be involved in regulation of gene expression, nucleoid organization and DNA protection. This Syntrophobacter fumaroxidans (strain DSM 10017 / MPOB) protein is Nucleoid-associated protein Sfum_2790.